Here is a 116-residue protein sequence, read N- to C-terminus: Prefoldin subunit beta (116 aa).

The protein belongs to the prefoldin subunit beta family. As to quaternary structure, heterohexamer of two alpha and four beta subunits.

The protein localises to the cytoplasm. Its function is as follows. Molecular chaperone capable of stabilizing a range of proteins. Seems to fulfill an ATP-independent, HSP70-like function in archaeal de novo protein folding. The chain is Prefoldin subunit beta (pfdB) from Archaeoglobus fulgidus (strain ATCC 49558 / DSM 4304 / JCM 9628 / NBRC 100126 / VC-16).